Here is an 831-residue protein sequence, read N- to C-terminus: Cadherin-related family member 3 (831 aa).

Residues 1–19 (MQGAVIVLVLFGITSGGEA) form the signal peptide. At 20 to 711 (LHLLHLPATS…VYSTSAWYVP (692 aa)) the chain is on the extracellular side. Cadherin domains are found at residues 24-132 (HLPA…PPQF), 136-236 (LAQG…TPRF), 237-344 (TSPR…NPAT), 346-466 (RKLT…RPSY), 462-570 (ERPS…TPNF), and 567-693 (TPNF…RPRI). N-linked (GlcNAc...) asparagine glycosylation is found at Asn-47, Asn-186, and Asn-257. The chain crosses the membrane as a helical span at residues 712-732 (FIVTLGSILLLGLLGSLMVLL). At 733-831 (SKAVYRHCSS…EAPVPKHTGR (99 aa)) the chain is on the cytoplasmic side. Disordered regions lie at residues 743–763 (TTRR…MNRE) and 798–831 (RWKG…HTGR). Residues 749-763 (KPLTKKRDTKRMNRE) show a composition bias toward basic and acidic residues. Over residues 805-817 (QLPNWPEPSTQHR) the composition is skewed to polar residues.

It is found in the cell membrane. Cadherins are calcium-dependent cell adhesion proteins. They preferentially interact with themselves in a homophilic manner in connecting cells; cadherins may thus contribute to the sorting of heterogeneous cell types. This chain is Cadherin-related family member 3 (Cdhr3), found in Mus musculus (Mouse).